Here is a 323-residue protein sequence, read N- to C-terminus: Macrolide efflux protein A (323 aa).

A run of 9 helical transmembrane segments spans residues 6–26 (VLSM…AIGV), 51–71 (LTIV…VLFI), 105–125 (SLQS…YSVW), 128–148 (NAII…VLIV), 182–202 (FALL…NALF), 219–239 (ITEI…GLFG), 245–265 (ILLI…SGLL), 270–290 (FFIF…YSGV), and 303–323 (YLGR…PIGL).

The protein belongs to the major facilitator superfamily. Drug:H(+) antiporter-3 (DHA3) (TC 2.A.1.21) family.

Its subcellular location is the cell membrane. Functionally, confers resistance to 14-membered macrolides including erythromycin and to 15-membered macrolides but not to 16-membered macrolides, lincosamides or analogs of streptogramin B. May function as an efflux pump to regulate intracellular macrolide levels. In Enterococcus faecalis (Streptococcus faecalis), this protein is Macrolide efflux protein A (mefA).